The primary structure comprises 453 residues: CAAX prenyl protease 1 (453 aa).

Residues 1–12 (MFDLKTILDHPN) are Lumenal-facing. Residues 13–33 (IPWKLIISGFSIAQFSFESYL) traverse the membrane as a helical segment. Over 34–89 (TYRQYQKLSETKLPPVLEDEIDDETFHKSRNYSRAKAKFSIFGDVYNLAQKLVFIK) the chain is Cytoplasmic. The helical transmembrane segment at 90–110 (YDLFPKIWHMAVSLLNAVLPV) threads the bilayer. Over 111–121 (RFHMVSTVAQS) the chain is Lumenal. The chain crosses the membrane as a helical span at residues 122–142 (LCFLGLLSSLSTLVDLPLSYY). At 143–167 (SHFVLEEKFGFNKLTVQLWITDMIK) the chain is on the cytoplasmic side. The chain crosses the membrane as a helical span at residues 168–188 (SLTLAYAIGGPILYLFLKIFD). Residues 189–197 (KFPTDFLWY) lie on the Lumenal side of the membrane. The chain crosses the membrane as a helical span at residues 198 to 218 (IMVFLFVVQILAMTIIPVFIM). Residues 219–306 (PMFNKFTPLE…HEIGHWQKNH (88 aa)) are Cytoplasmic-facing. His-297 contacts Zn(2+). Glu-298 is a catalytic residue. Zn(2+) is bound at residue His-301. The helical transmembrane segment at 307-327 (IVNMVIFSQLHTFLIFSLFTS) threads the bilayer. At 328 to 357 (IYRNTSFYNTFGFFLEKSTGSFVDPVITKE) the chain is on the lumenal side. The chain crosses the membrane as a helical span at residues 358-378 (FPIIIGFMLFNDLLTPLECAM). The Cytoplasmic portion of the chain corresponds to 379 to 453 (QFVMSLISRT…LDYVSEKKKN (75 aa)). Glu-390 contacts Zn(2+). Asp-394 (proton donor) is an active-site residue.

It belongs to the peptidase M48A family. Requires Zn(2+) as cofactor.

The protein resides in the endoplasmic reticulum membrane. The enzyme catalyses Hydrolyzes the peptide bond -P2-(S-farnesyl or geranylgeranyl)C-P1'-P2'-P3'-COOH where P1' and P2' are amino acids with aliphatic side chains and P3' is any C-terminal residue.. In terms of biological role, proteolytically removes the C-terminal three residues of farnesylated A-factor mating pheromone. Also acts to cleave the N-terminal extension of the pheromone. Does not act on Ras. The protein is CAAX prenyl protease 1 (STE24) of Saccharomyces cerevisiae (strain ATCC 204508 / S288c) (Baker's yeast).